Reading from the N-terminus, the 486-residue chain is Uridine/cytidine kinase UKL1, chloroplastic (486 aa).

Residues 1 to 47 (MPEDSSSLDYAMEKASGPHFSGLRFDGLLSSSPPNSSVVSSLRSAVS) constitute a chloroplast transit peptide. Low complexity predominate over residues 31-54 (SSPPNSSVVSSLRSAVSSSSPSSS). Residues 31–67 (SSPPNSSVVSSLRSAVSSSSPSSSDPEAPKQPFIIGV) form a disordered region. Positions 59–264 (PKQPFIIGVS…ITQHIHTKLG (206 aa)) are uridine kinase. Positions 274–486 (NVYVIQSTFQ…RYFGTDEEDQ (213 aa)) are uracil phosphoribosyltransferase. Residues K298, R307, and 341 to 344 (CKKL) each bind GTP. Positions 351 and 376 each coordinate 5-phospho-alpha-D-ribose 1-diphosphate. R396 is a binding site for GTP. 5-phospho-alpha-D-ribose 1-diphosphate contacts are provided by residues D402, 407–410 (TGNS), and E473. 472–474 (GEF) is a binding site for uracil.

This sequence in the N-terminal section; belongs to the uridine kinase family. It in the C-terminal section; belongs to the UPRTase family. In terms of tissue distribution, expressed in roots, leaves and stems.

Its subcellular location is the plastid. It is found in the chloroplast. The protein resides in the cytoplasm. The enzyme catalyses cytidine + ATP = CMP + ADP + H(+). The catalysed reaction is uridine + ATP = UMP + ADP + H(+). It participates in pyrimidine metabolism; CTP biosynthesis via salvage pathway; CTP from cytidine: step 1/3. It functions in the pathway pyrimidine metabolism; UMP biosynthesis via salvage pathway; UMP from uridine: step 1/1. In terms of biological role, involved in the pyrimidine salvage pathway. Phosphorylates uridine to uridine monophosphate (UMP). Phosphorylates cytidine to cytidine monophosphate (CMP). Does not possess uracil phosphoribosyltransferase (UPRTase) activity that catalyzes the conversion of uracil and 5-phospho-alpha-D-ribose 1-diphosphate (PRPP) to UMP and diphosphate. In Arabidopsis thaliana (Mouse-ear cress), this protein is Uridine/cytidine kinase UKL1, chloroplastic.